The chain runs to 659 residues: MVQKFQSPVRVYKYPFELVMKAYERRFPTCPQMPIVLDCEVIKDESLEDGAKRNTSRRCKLAVDAPYIFKKLIGVDHVYFLQHNFLDLANRTLSIEAVNESFSSRIEIFERCRYYAHPDNSEWTCFDQSATLDIKNFFGFEHSMEKMGMKQYTQTTLKGKEIIEFFIGQLREEGITHVERWTSPSDATKSPTLDQASDQQHSILLDGDFIARSLGQLSPMQESKLLELRKMLDGVDDLERVPSYQTILRFLAARDWHVSQAYAMLCDSLRWRREHRIDALLAEYSKPAVVVEHFPGGWHHLDKDGRPVYILRLGHMDVKGLLKSLGMDGLLRLALHICEEGIQKINESAERLEKPVLNWSLLVDLEGLSMRHLWRPGIKALLNIIETVERNYPETMGRVLVVRAPRVFPIAWTIVSAFIDEHTRSKFLFYGPDCAHMKDGLAQYLDEEIVPDFLGGPCKTMIHEGGLVPKTLYKMNSLEDHDDEVTAELPTTAAAQALVPGKRLSANQQHDHRNLYKSVDLKAGFAHELLIRNEDPKSVLTWDFDVMRNDLHFTLYRVTQELPEKNDSAVSYFDLQDFVEGVNYFREEPTLICRHKESVQGSHVMHHNDSYLMHWFSPSGAQLNVFYEVLSSANYKGSMTSLQSAFSSNSSAASSVQSR.

In terms of domain architecture, PRELI/MSF1 spans 3 to 175; the sequence is QKFQSPVRVY…FIGQLREEGI (173 aa). Residues 286-462 form the CRAL-TRIO domain; that stretch reads KPAVVVEHFP…FLGGPCKTMI (177 aa). Phosphoserine is present on Ser-477. A GOLD domain is found at 512 to 631; sequence HRNLYKSVDL…QLNVFYEVLS (120 aa).

As to expression, restricted to the developing gut and central nervous system (CNS).

The protein localises to the mitochondrion. This chain is Protein real-time (retm), found in Drosophila melanogaster (Fruit fly).